Here is a 92-residue protein sequence, read N- to C-terminus: Integration host factor subunit beta (92 aa).

The protein belongs to the bacterial histone-like protein family. Heterodimer of an alpha and a beta chain.

This protein is one of the two subunits of integration host factor, a specific DNA-binding protein that functions in genetic recombination as well as in transcriptional and translational control. The protein is Integration host factor subunit beta of Bartonella tribocorum (strain CIP 105476 / IBS 506).